A 69-amino-acid chain; its full sequence is DNA-directed RNA polymerase subunit omega (69 aa).

This sequence belongs to the RNA polymerase subunit omega family. In terms of assembly, the RNAP catalytic core consists of 2 alpha, 1 beta, 1 beta' and 1 omega subunit. When a sigma factor is associated with the core the holoenzyme is formed, which can initiate transcription.

The enzyme catalyses RNA(n) + a ribonucleoside 5'-triphosphate = RNA(n+1) + diphosphate. In terms of biological role, promotes RNA polymerase assembly. Latches the N- and C-terminal regions of the beta' subunit thereby facilitating its interaction with the beta and alpha subunits. The chain is DNA-directed RNA polymerase subunit omega from Pelotomaculum thermopropionicum (strain DSM 13744 / JCM 10971 / SI).